A 338-amino-acid polypeptide reads, in one-letter code: MPEVKDGIIDRKMQGEFVSSFIRQLKFHREDFKNIGYIGGFTSLIDMGNFALSFNNDGVGTKTMIAEQANKYDTLGIDCVAMNVNDAITVGSEPIAMVDYLAVRDLNEDIAKQLGNGFNVGAQIANISIVGGETAVVPEIVNHIDVSGAVIGIVQKNQIITGANIKEGDVIIGLGSSGLHSNGFTTVRKIISDNEINLFDNFPGESKKTYEVLLEPTRIYVREILDVMGIIQIKGMANITGGGFKNITRMKDMKYVIDDPMEPQNVFVRLMELGNLNYKQMYEIFNMGTGFVVVIGEDDKIDFINTLKNRVPLKVIGHVENGTGVEIPKYSVSLMGYY.

Belongs to the AIR synthase family.

It is found in the cytoplasm. The enzyme catalyses 2-formamido-N(1)-(5-O-phospho-beta-D-ribosyl)acetamidine + ATP = 5-amino-1-(5-phospho-beta-D-ribosyl)imidazole + ADP + phosphate + H(+). It functions in the pathway purine metabolism; IMP biosynthesis via de novo pathway; 5-amino-1-(5-phospho-D-ribosyl)imidazole from N(2)-formyl-N(1)-(5-phospho-D-ribosyl)glycinamide: step 2/2. The sequence is that of Phosphoribosylformylglycinamidine cyclo-ligase from Thermoplasma volcanium (strain ATCC 51530 / DSM 4299 / JCM 9571 / NBRC 15438 / GSS1).